The primary structure comprises 78 residues: Large ribosomal subunit protein bL28 (78 aa).

This sequence belongs to the bacterial ribosomal protein bL28 family.

In Psychrobacter sp. (strain PRwf-1), this protein is Large ribosomal subunit protein bL28.